A 261-amino-acid polypeptide reads, in one-letter code: Immediate-early protein IE-0 (261 aa).

An RING-type zinc finger spans residues 212–257 (CNVCKEISTDERFLKPKECCEYAICNACCVNMWKTATTHAKCPACR).

In terms of assembly, interacts with proteins C42 and FP25. Interacts with host beta-tubulin. Interacts with Ac66 and vUb.

It is found in the host nucleus. It localises to the host cytoplasm. The protein resides in the virion. Its function is as follows. Putative viral E3 ligase that plays an essential regulatory role in both viral DNA replication and transcriptional transactivation. The role in transcription has been shown to include activation of gene expression from early viral promoters. Also promotes the efficient egress of nucleocapsids from the host nucleus. May act as an E3 ligase that promotes ubiquitination of nucleocapsids proteins by vUbi and subsequent viral egress for the host nucleus. The chain is Immediate-early protein IE-0 (IE0) from Lepidoptera (butterflies and moths).